The chain runs to 357 residues: Dynein axonemal assembly factor 10 (357 aa).

WD repeat units lie at residues 63–105, 115–154, 162–205, 207–249, 257–297, and 319–357; these read EKAK…MPVY, NAID…DPVA, ENKR…LRWE, NIKN…PTKG, AHKS…QRSK, and LSTQ…LNKI.

As to quaternary structure, component of the PAQosome complex which is responsible for the biogenesis of several protein complexes and which consists of R2TP complex members RUVBL1, RUVBL2, RPAP3 and PIH1D1, URI complex members PFDN2, PFDN6, PDRG1, UXT and URI1 as well as ASDURF, POLR2E and DNAAF10/WDR92. Interacts with PIH1D1; the interaction associates DNAAF10 with the R2TP complex. Interacts with several dynein axonemal assembly factors. In terms of tissue distribution, widely expressed with the highest expression in testis.

It localises to the dynein axonemal particle. Key assembly factor specifically required for the stability of axonemal dynein heavy chains in cytoplasm. In Homo sapiens (Human), this protein is Dynein axonemal assembly factor 10.